A 223-amino-acid chain; its full sequence is Endonuclease III (223 aa).

The 20-residue stretch at 118-137 (RDFLTAIEGIGDKTADVVLL) folds into the HhH domain. The [4Fe-4S] cluster site is built by C198, C205, C208, and C214.

It belongs to the Nth/MutY family. [4Fe-4S] cluster serves as cofactor.

The enzyme catalyses 2'-deoxyribonucleotide-(2'-deoxyribose 5'-phosphate)-2'-deoxyribonucleotide-DNA = a 3'-end 2'-deoxyribonucleotide-(2,3-dehydro-2,3-deoxyribose 5'-phosphate)-DNA + a 5'-end 5'-phospho-2'-deoxyribonucleoside-DNA + H(+). In terms of biological role, probably part of a 4-gene DNA damage response locus in which the upstream ups system, in combination with this downstream locus, functions in homologous recombination to rescue Sulfolobales from DNA-damaging threats. DNA repair enzyme that has both DNA N-glycosylase activity and AP-lyase activity. The DNA N-glycosylase activity releases various damaged pyrimidines from DNA by cleaving the N-glycosidic bond, leaving an AP (apurinic/apyrimidinic) site. The AP-lyase activity cleaves the phosphodiester bond 3' to the AP site by a beta-elimination, leaving a 3'-terminal unsaturated sugar and a product with a terminal 5'-phosphate. Nicks UV-treated plasmid DNA in a dose-dependent manner, has no activity on untreated DNA. The sequence is that of Endonuclease III from Sulfolobus acidocaldarius (strain ATCC 33909 / DSM 639 / JCM 8929 / NBRC 15157 / NCIMB 11770).